The following is a 207-amino-acid chain: Porin MspD (207 aa).

An N-terminal signal peptide occupies residues 1–24; that stretch reads MRYLVMMFALLVSVTLVSPRPANA.

It belongs to the mycobacterial porin (TC 1.B.24) family. Octamers. Probably forms a goblet with the wide end on the exterior of the outer membrane and a central channel. It is not known if mixed oligomers of MspD with other Msp subunits form in vivo.

The protein localises to the cell outer membrane. It localises to the secreted. Its subcellular location is the cell wall. In terms of biological role, a backup porin induced when MspA, the major porin, is deleted. It probably forms a water-filled channel which favors the permeation of cations. There are about 2400 porins in wild-type, 800 in an mspA deletion and 150 in a double mspA-mspC deletion. The protein is Porin MspD (mspD) of Mycolicibacterium smegmatis (strain ATCC 700084 / mc(2)155) (Mycobacterium smegmatis).